A 475-amino-acid polypeptide reads, in one-letter code: DNA-binding protein D-ETS-6 (475 aa).

The interval serine 42–proline 150 is disordered. Over residues serine 70–proline 108 the composition is skewed to low complexity. Positions valine 109 to valine 121 are enriched in pro residues. Residues serine 122–valine 144 are compositionally biased toward low complexity. The region spanning arginine 132–alanine 219 is the PNT domain. Residues isoleucine 255–aspartate 335 constitute a DNA-binding region (ETS). Positions glycine 350–asparagine 475 are disordered. Residues proline 375–histidine 388 show a composition bias toward basic residues. The segment covering serine 401–serine 436 has biased composition (low complexity). Over residues arginine 453–asparagine 475 the composition is skewed to polar residues.

The protein belongs to the ETS family. As to expression, embryonic ventral nervous system and 1 pair of neurons in each thoracic segment.

It is found in the nucleus. The chain is DNA-binding protein D-ETS-6 (Ets21C) from Drosophila melanogaster (Fruit fly).